A 98-amino-acid chain; its full sequence is Small ribosomal subunit protein bS20 (98 aa).

Residues 1-12 are compositionally biased toward basic residues; the sequence is MAPRKPSKKVGP. The disordered stretch occupies residues 1–34; it reads MAPRKPSKKVGPQKRPSAEKRVITSKKKQLRNQS.

Belongs to the bacterial ribosomal protein bS20 family.

Functionally, binds directly to 16S ribosomal RNA. In Chlamydia muridarum (strain MoPn / Nigg), this protein is Small ribosomal subunit protein bS20.